A 95-amino-acid polypeptide reads, in one-letter code: MASETVANHQEKALALLQADAEKILRLIKVQMDHLTMPQCPLYEEVLDTQMFGLSREVDFAVRLGLIAEEQGKAMLGELERELSALHEAFTNKQQ.

This sequence belongs to the UPF0358 family.

This is UPF0358 protein BCG9842_B1188 from Bacillus cereus (strain G9842).